A 164-amino-acid chain; its full sequence is Peptidyl-prolyl cis-trans isomerase A (164 aa).

At methionine 1 the chain carries N-acetylmethionine. Valine 2 is subject to N-acetylvaline; in Peptidyl-prolyl cis-trans isomerase A, N-terminally processed. Residues phenylalanine 7–glutamine 163 enclose the PPIase cyclophilin-type domain. Lysine 28 bears the N6-acetyllysine; alternate mark. Residue lysine 28 forms a Glycyl lysine isopeptide (Lys-Gly) (interchain with G-Cter in SUMO2); alternate linkage. Lysine 28 participates in a covalent cross-link: Glycyl lysine isopeptide (Lys-Gly) (interchain with G-Cter in ubiquitin); alternate. Residues lysine 44 and lysine 76 each carry the N6-acetyllysine modification. A disulfide bridge links cysteine 62 with cysteine 161. Serine 77 carries the phosphoserine modification. Lysine 82 carries the N6-acetyllysine; alternate modification. Lysine 82 is covalently cross-linked (Glycyl lysine isopeptide (Lys-Gly) (interchain with G-Cter in SUMO2); alternate). Threonine 93 is subject to Phosphothreonine. A glycan (N-linked (GlcNAc...) asparagine) is linked at asparagine 108. Residues lysine 125, lysine 131, and lysine 133 each carry the N6-acetyllysine modification.

It belongs to the cyclophilin-type PPIase family. PPIase A subfamily. Interacts with protein phosphatase PPP3CA/calcineurin A. Interacts with isoform 2 of BSG/CD147. Interacts with FOXO1; the interaction promotes FOXO1 dephosphorylation, nuclear accumulation and transcriptional activity. Interacts with integrin ITGA2B:ITGB3; the interaction is ROS and peptidyl-prolyl cis-trans isomerase (PPIase) activity-dependent and is increased in the presence of thrombin. Interacts with MAP3K5. Interacts with TARDBP; the interaction is dependent on the RNA-binding activity of TARDBP and the PPIase activity of PPIA/CYPA and the acetylation of PPIA/CYPA at Lys-125 favors the interaction. Interacts with HNRNPA1, HNRNPA2B1, HNRNPC, RBMX, HNRNPK and HNRNPM. In terms of processing, acetylation at Lys-125 markedly inhibits catalysis of cis to trans isomerization. PPIA acetylation also antagonizes the immunosuppressive effects of cyclosporine by inhibiting the sequential steps of cyclosporine binding and calcineurin inhibition. Acetylation at Lys-125 favors the interaction with TARDBP.

It localises to the cytoplasm. Its subcellular location is the secreted. The protein resides in the nucleus. It catalyses the reaction [protein]-peptidylproline (omega=180) = [protein]-peptidylproline (omega=0). With respect to regulation, binds cyclosporin A (CsA). CsA mediates some of its effects via an inhibitory action on PPIase. In terms of biological role, catalyzes the cis-trans isomerization of proline imidic peptide bonds in oligopeptides. Exerts a strong chemotactic effect on leukocytes partly through activation of one of its membrane receptors BSG/CD147, initiating a signaling cascade that culminates in MAPK/ERK activation. Activates endothelial cells (ECs) in a proinflammatory manner by stimulating activation of NF-kappa-B and ERK, JNK and p38 MAP-kinases and by inducing expression of adhesion molecules including SELE and VCAM1. Induces apoptosis in ECs by promoting the FOXO1-dependent expression of CCL2 and BCL2L11 which are involved in EC chemotaxis and apoptosis. In response to oxidative stress, initiates proapoptotic and antiapoptotic signaling in ECs via activation of NF-kappa-B and AKT1 and up-regulation of antiapoptotic protein BCL2. Negatively regulates MAP3K5/ASK1 kinase activity, autophosphorylation and oxidative stress-induced apoptosis mediated by MAP3K5/ASK1. Necessary for the assembly of TARDBP in heterogeneous nuclear ribonucleoprotein (hnRNP) complexes and regulates TARDBP binding to RNA UG repeats and TARDBP-dependent expression of HDAC6, ATG7 and VCP which are involved in clearance of protein aggregates. Plays an important role in platelet activation and aggregation. Regulates calcium mobilization and integrin ITGA2B:ITGB3 bidirectional signaling via increased ROS production as well as by facilitating the interaction between integrin and the cell cytoskeleton. Binds heparan sulfate glycosaminoglycans. The protein is Peptidyl-prolyl cis-trans isomerase A (PPIA) of Bos taurus (Bovine).